Here is a 394-residue protein sequence, read N- to C-terminus: MHVIRETLKGGKGEVIKNPKVFIDPLSVFKEIPFREDILRDAAIAIRYFVKNEVKFSNLFLGLTGTGKTFVSKYIFNEIEEVKKEDEEYKDVKQAYVNCREVGGTPQAVLSSLAGKLTGFSVPKHGINLGEYIDKIKNGTRNIRAIIYLDEVDTLVKRRGGDIVLYQLLRSDANISVIMISNDINVRDYMEPRVLSSLGPSVIFKPYDAEQLKFILSKYAEYGLIKGTYDDEILSYIAAISAKEHGDARKAVNLLFRAAQLASGGGIIRKEHVDKAIVDYEQERLIEAVKALPFHYKLALRSLIESEDVMSAHKMYTDLCNKFKQKPLSYRRFSDIISELDMFGIVKIRIINRGRAGGVKKYALVEDKEKVLRALNETFEDSISIGDFDDVGEN.

ATP contacts are provided by residues 66–70 and Y207; that span reads TGKTF.

This sequence belongs to the CDC6/cdc18 family. Monomer. Interacts with Cdc6-1, Cdc6-2, MCM and PolB1.

Functionally, involved in regulation of DNA replication. May play essential roles in origin recognition and cell cycle control of replication. Binds to DNA, with a preference for molecules that contain a bubble, a fork, or a tail. Inhibits the binding of the MCM helicase to the origin DNA and inhibits its DNA helicase activity. Also regulates the DNA polymerase and the nuclease activities of PolB1. Inhibits the DNA-binding activity of Cdc6-1 and Cdc6-2. This Saccharolobus solfataricus (strain ATCC 35092 / DSM 1617 / JCM 11322 / P2) (Sulfolobus solfataricus) protein is ORC1-type DNA replication protein 3 (cdc6-3).